The primary structure comprises 382 residues: MNLKEKTRALFAEIFGYPATHTIQAPGRVNLIGEHTDYNDGFVLPCAIDYQTVISCAPRDDRTVRVIAADYDNQLDEFSLDAPIVTHDSQQWSNYVRGVVKHLQQRNNAFGGVDMVISGNVPQGAGLSSSASLEVAVGTVFQQLYHLPLDGAQIALNGQEAENQFVGCNCGIMDQLISALGKKDHALLIDCRTLGAKAVSMPKGVAVVIINSNFKRTLVGSEYNTRREQCETGARFFQQPALRDVSLEAFNAVASELDPVVAKRVRHVLSENARTVEAASALEKGDLQRMGQLMAESHASMRDDFEITVPQIDTLVDIVKATIGDQGGVRMTGGGFGGCVVALIPEDLVPAVQQAVAQQYEAKTGIKETFYVCKPSQGAGQC.

34–37 is a binding site for substrate; the sequence is EHTD. 124–130 is an ATP binding site; sequence GAGLSSS. The Mg(2+) site is built by S130 and E162. The Proton acceptor role is filled by D174. Substrate is bound at residue Y223.

The protein belongs to the GHMP kinase family. GalK subfamily.

The protein localises to the cytoplasm. It carries out the reaction alpha-D-galactose + ATP = alpha-D-galactose 1-phosphate + ADP + H(+). It functions in the pathway carbohydrate metabolism; galactose metabolism. In terms of biological role, catalyzes the transfer of the gamma-phosphate of ATP to D-galactose to form alpha-D-galactose-1-phosphate (Gal-1-P). This Salmonella agona (strain SL483) protein is Galactokinase.